The following is a 1070-amino-acid chain: DNA-directed RNA polymerase subunit beta (1070 aa).

It belongs to the RNA polymerase beta chain family. In terms of assembly, in plastids the minimal PEP RNA polymerase catalytic core is composed of four subunits: alpha, beta, beta', and beta''. When a (nuclear-encoded) sigma factor is associated with the core the holoenzyme is formed, which can initiate transcription.

The protein localises to the plastid. It localises to the chloroplast. The enzyme catalyses RNA(n) + a ribonucleoside 5'-triphosphate = RNA(n+1) + diphosphate. In terms of biological role, DNA-dependent RNA polymerase catalyzes the transcription of DNA into RNA using the four ribonucleoside triphosphates as substrates. This Illicium oligandrum (Star anise) protein is DNA-directed RNA polymerase subunit beta.